The chain runs to 583 residues: Aspartate--tRNA ligase (583 aa).

Residue Glu-174 coordinates L-aspartate. The interval Gln-198–Lys-201 is aspartate. L-aspartate is bound at residue Arg-220. ATP-binding positions include Arg-220 to Glu-222 and Gln-229. His-443 contributes to the L-aspartate binding site. Residue Glu-477 participates in ATP binding. An L-aspartate-binding site is contributed by Arg-484. Gly-529 to Arg-532 provides a ligand contact to ATP.

It belongs to the class-II aminoacyl-tRNA synthetase family. Type 1 subfamily. As to quaternary structure, homodimer.

Its subcellular location is the cytoplasm. It catalyses the reaction tRNA(Asp) + L-aspartate + ATP = L-aspartyl-tRNA(Asp) + AMP + diphosphate. Its function is as follows. Catalyzes the attachment of L-aspartate to tRNA(Asp) in a two-step reaction: L-aspartate is first activated by ATP to form Asp-AMP and then transferred to the acceptor end of tRNA(Asp). In Streptococcus thermophilus (strain CNRZ 1066), this protein is Aspartate--tRNA ligase.